We begin with the raw amino-acid sequence, 232 residues long: Cytidylate kinase (232 aa).

Residue 19–27 participates in ATP binding; the sequence is GPAGVGKTT.

The protein belongs to the cytidylate kinase family. Type 1 subfamily.

Its subcellular location is the cytoplasm. It catalyses the reaction CMP + ATP = CDP + ADP. The enzyme catalyses dCMP + ATP = dCDP + ADP. The protein is Cytidylate kinase of Nitratidesulfovibrio vulgaris (strain DP4) (Desulfovibrio vulgaris).